The sequence spans 433 residues: Tol-Pal system protein TolB (433 aa).

An N-terminal signal peptide occupies residues 1–21 (MINLFRGLLVVLCFASAMVSA).

This sequence belongs to the TolB family. In terms of assembly, the Tol-Pal system is composed of five core proteins: the inner membrane proteins TolA, TolQ and TolR, the periplasmic protein TolB and the outer membrane protein Pal. They form a network linking the inner and outer membranes and the peptidoglycan layer.

The protein localises to the periplasm. In terms of biological role, part of the Tol-Pal system, which plays a role in outer membrane invagination during cell division and is important for maintaining outer membrane integrity. The sequence is that of Tol-Pal system protein TolB from Pseudomonas syringae pv. syringae (strain B728a).